Reading from the N-terminus, the 92-residue chain is Small ribosomal subunit protein bS18B (92 aa).

The protein belongs to the bacterial ribosomal protein bS18 family. As to quaternary structure, part of the 30S ribosomal subunit. Forms a tight heterodimer with protein bS6.

Binds as a heterodimer with protein bS6 to the central domain of the 16S rRNA, where it helps stabilize the platform of the 30S subunit. In Cupriavidus pinatubonensis (strain JMP 134 / LMG 1197) (Cupriavidus necator (strain JMP 134)), this protein is Small ribosomal subunit protein bS18B.